Consider the following 1018-residue polypeptide: UPF0182 protein Francci3_3781 (1018 aa).

7 helical membrane-spanning segments follow: residues 13–33 (TKVLVPVLLVIVLAITIIAIF), 60–80 (ILLFVLFGVVMAIIVGTNIVL), 109–129 (MLLILLAVTTLFGLAAGLSAA), 167–187 (FLLGFLLTAVLLSLLVTLLTH), 208–228 (AHISVLLGLLALLKAWAYYLD), 250–270 (AVLPAKLILLFISLACAVLFI), and 283–303 (LGAGILVLSSVVIGGIYPAIV). Low complexity-rich tracts occupy residues 886–896 (TTDAGQDGTPA) and 960–980 (SSPAATPPAATATRAGASVPA). Disordered stretches follow at residues 886–920 (TTDAGQDGTPAPRSGQGGAGVPPPGQTALQDAVGD) and 960–1018 (SSPA…PAPG). Positions 981-995 (SPVPASPAAKPPAPS) are enriched in pro residues.

Belongs to the UPF0182 family.

The protein resides in the cell membrane. The polypeptide is UPF0182 protein Francci3_3781 (Frankia casuarinae (strain DSM 45818 / CECT 9043 / HFP020203 / CcI3)).